The sequence spans 109 residues: T-cell surface glycoprotein CD1b (109 aa).

Positions 1 to 18 (MLLLPLLLLAGRFPGGDN) are cleaved as a signal peptide. N-linked (GlcNAc...) asparagine glycosylation is found at Asn-38 and Asn-75.

As to quaternary structure, heterodimer with B2M (beta-2-microglobulin). Interacts with saposin C. Expressed on cortical thymocytes, on certain T-cell leukemias, and in various other tissues.

It localises to the cell membrane. Its subcellular location is the endosome membrane. The protein resides in the lysosome membrane. Functionally, antigen-presenting protein that binds self and non-self lipid and glycolipid antigens and presents them to T-cell receptors on natural killer T-cells. This Oryctolagus cuniculus (Rabbit) protein is T-cell surface glycoprotein CD1b (CD1B).